Consider the following 370-residue polypeptide: 3-isopropylmalate dehydrogenase (370 aa).

Residue 76-89 (GPKWDQNPSELRPE) participates in NAD(+) binding. Substrate contacts are provided by R96, R106, R134, and D224. Mg(2+) is bound by residues D224, D248, and D252. 282–294 (GSAPDIAGQNIAN) is a binding site for NAD(+).

It belongs to the isocitrate and isopropylmalate dehydrogenases family. LeuB type 1 subfamily. In terms of assembly, homodimer. It depends on Mg(2+) as a cofactor. Mn(2+) is required as a cofactor.

The protein localises to the cytoplasm. The enzyme catalyses (2R,3S)-3-isopropylmalate + NAD(+) = 4-methyl-2-oxopentanoate + CO2 + NADH. It functions in the pathway amino-acid biosynthesis; L-leucine biosynthesis; L-leucine from 3-methyl-2-oxobutanoate: step 3/4. Catalyzes the oxidation of 3-carboxy-2-hydroxy-4-methylpentanoate (3-isopropylmalate) to 3-carboxy-4-methyl-2-oxopentanoate. The product decarboxylates to 4-methyl-2 oxopentanoate. The protein is 3-isopropylmalate dehydrogenase of Bacillus licheniformis (strain ATCC 14580 / DSM 13 / JCM 2505 / CCUG 7422 / NBRC 12200 / NCIMB 9375 / NCTC 10341 / NRRL NRS-1264 / Gibson 46).